A 585-amino-acid polypeptide reads, in one-letter code: uncharacterized protein (585 aa).

The protein to E.coli YejM.

This is an uncharacterized protein from Haemophilus influenzae (strain ATCC 51907 / DSM 11121 / KW20 / Rd).